Consider the following 156-residue polypeptide: Protein FAM162A (156 aa).

The disordered stretch occupies residues 37-57; that stretch reads TNGFCSKPQESPKPPDQHTYS. The tract at residues 78-104 is required for proapoptotic activity; the sequence is RFKKEDEIPETVSFEMLDAAKNKVRVK. Residues 105–122 traverse the membrane as a helical segment; sequence ISYVMIALTVAGCVLMVI.

The protein belongs to the UPF0389 family. In terms of assembly, interacts with HSP90AB1; HSP90AB1 is essential for FAM162A mitochondrial localization and pro-apoptotic activity. Interacts with VDAC2; the interaction is probably involved in inducing mitochondrial permeability transition.

It is found in the mitochondrion membrane. Functionally, proposed to be involved in regulation of apoptosis; the exact mechanism may differ between cell types/tissues. May be involved in hypoxia-induced cell death of transformed cells implicating cytochrome C release and caspase activation (such as CASP9) and inducing mitochondrial permeability transition. May be involved in hypoxia-induced cell death of neuronal cells probably by promoting release of AIFM1 from mitochondria to cytoplasm and its translocation to the nucleus; however, the involvement of caspases has been reported conflictingly. This chain is Protein FAM162A (FAM162A), found in Bos taurus (Bovine).